We begin with the raw amino-acid sequence, 265 residues long: Homeobox protein CDX-1 (265 aa).

Residues 9-153 (KDSPVYPGPA…GGGGSGKTRT (145 aa)) are disordered. Positions 30 to 42 (YGPPAPPPAPPQY) are enriched in pro residues. Residues 73-92 (AAAYGPGPAAPAASPASLAF) show a composition bias toward low complexity. Pro residues predominate over residues 93-108 (GPPPDFSPVPAPPGPG). The segment covering 110–126 (GLLAQPLGGPGTPSSPG) has biased composition (low complexity). The homeobox DNA-binding region spans 154–213 (KDKYRVVYTDHQRLELEKEFHYSRYITIRRKSELAANLGLTERQVKIWFQNRRAKERKVN). Residues 157 to 178 (YRVVYTDHQRLELEKEFHYSRY) form an interaction with DNA region. The interval 196–207 (RQVKIWFQNRRA) is interaction with 5-mCpG DNA. Residues 207-217 (AKERKVNKKKQ) show a composition bias toward basic residues. Positions 207–265 (AKERKVNKKKQQQQQPPQPPMAHDITATPAGPSLGGLCPSNTSLLATSSPMPVKEEFLP) are disordered. Residues 245 to 256 (PSNTSLLATSSP) show a composition bias toward polar residues.

Belongs to the Caudal homeobox family. Intestinal epithelium.

The protein localises to the nucleus. Functionally, plays a role in transcriptional regulation. Involved in activated KRAS-mediated transcriptional activation of PRKD1 in colorectal cancer (CRC) cells. Binds to the PRKD1 promoter in colorectal cancer (CRC) cells. Could play a role in the terminal differentiation of the intestine. Binds preferentially to methylated DNA. This Homo sapiens (Human) protein is Homeobox protein CDX-1 (CDX1).